The sequence spans 75 residues: Putative antitoxin VapB17 (75 aa).

Its function is as follows. Putative antitoxin component of a possible type II toxin-antitoxin (TA) system. The cognate toxin is VapC17. This Mycobacterium tuberculosis (strain CDC 1551 / Oshkosh) protein is Putative antitoxin VapB17 (vapB17).